Consider the following 758-residue polypeptide: EMILIN-3 (758 aa).

Positions 1–21 are cleaved as a signal peptide; that stretch reads MGRRLSVWLCTVAALLSGAQA. Positions 54–130 constitute an EMI domain; it reads HKSLCAYVVH…PGLTGESCPE (77 aa). Cystine bridges form between Cys-58-Cys-120, Cys-85-Cys-91, and Cys-119-Cys-128. A glycan (N-linked (GlcNAc...) asparagine) is linked at Asn-65. The tract at residues 131 to 178 is disordered; that stretch reads HLTDHGATPPHQEPEPQIPLGQLGPGPRPSPYSREAPRPRGRKGQGPF. The stretch at 379 to 401 forms a coiled coil; that stretch reads SQLALISARVDSLERNLQAVTET. Asn-436 is a glycosylation site (N-linked (GlcNAc...) asparagine). 2 coiled-coil regions span residues 460–483 and 528–567; these read GSTLEQRVQSLEERLATLTGELSP and AEVKAWQSRSEALLHQVARHTALLQQLNGTVAEVQGQLAE. 2 N-linked (GlcNAc...) asparagine glycosylation sites follow: Asn-555 and Asn-609. 2 coiled-coil regions span residues 642 to 677 and 720 to 753; these read RQVLNLRGELEQLKAGMANVARGLSRCRDTAQELQH and HIDKLNHTLAQHTQDIARLRDDLLDCRAQLAEVR. A glycan (N-linked (GlcNAc...) asparagine) is linked at Asn-725.

It localises to the secreted. Its subcellular location is the extracellular space. It is found in the extracellular matrix. The protein localises to the cytoplasm. The chain is EMILIN-3 (Emilin3) from Mus musculus (Mouse).